The sequence spans 152 residues: MQLTELIETTVTGLGYELVELERTGRGMLCIYIDQPAGISLDDCEKVTRQLQHVLTVENIDYERLEVSSPGLDRPLKKLADFERFAGSEVSVTLKKPLDGRKTYRGILHAPNGETIGLEFEGKKGEAAMLDFTLADIDKARLIPQVDFRSRK.

Belongs to the RimP family.

Its subcellular location is the cytoplasm. Functionally, required for maturation of 30S ribosomal subunits. The chain is Ribosome maturation factor RimP from Burkholderia cenocepacia (strain ATCC BAA-245 / DSM 16553 / LMG 16656 / NCTC 13227 / J2315 / CF5610) (Burkholderia cepacia (strain J2315)).